The sequence spans 40 residues: Photosystem II reaction center protein J (40 aa).

A helical membrane pass occupies residues 8 to 28 (IPLWLIGTVTGTLVIGLIGIF).

Belongs to the PsbJ family. In terms of assembly, PSII is composed of 1 copy each of membrane proteins PsbA, PsbB, PsbC, PsbD, PsbE, PsbF, PsbH, PsbI, PsbJ, PsbK, PsbL, PsbM, PsbT, PsbX, PsbY, PsbZ, Psb30/Ycf12, at least 3 peripheral proteins of the oxygen-evolving complex and a large number of cofactors. It forms dimeric complexes.

The protein resides in the plastid. The protein localises to the chloroplast thylakoid membrane. Its function is as follows. One of the components of the core complex of photosystem II (PSII). PSII is a light-driven water:plastoquinone oxidoreductase that uses light energy to abstract electrons from H(2)O, generating O(2) and a proton gradient subsequently used for ATP formation. It consists of a core antenna complex that captures photons, and an electron transfer chain that converts photonic excitation into a charge separation. In Cycas taitungensis (Prince sago), this protein is Photosystem II reaction center protein J.